The chain runs to 521 residues: Importin subunit alpha-4 (521 aa).

The segment at 1–29 (MAENPGLENHRIKSFKNKGRDVETMRRHR) is disordered. An N-acetylalanine modification is found at alanine 2. Residues 2–58 (AENPGLENHRIKSFKNKGRDVETMRRHRNEVTVELRKNKRDEHLLKKRNVPQEESLE) enclose the IBB domain. The span at 18–29 (KGRDVETMRRHR) shows a compositional bias: basic and acidic residues. Positions 43-52 (EHLLKKRNVP) match the Nuclear localization signal motif. Residues serine 56 and serine 60 each carry the phosphoserine modification. The stretch at 66-106 (FKAQNVTLEAILQNATSDNPVVQLSAVQAARKLLSSDRNPP) is one ARM 1; truncated repeat. ARM repeat units lie at residues 107-149 (IDDL…TSAQ), 150-194 (TQAV…CRDY), 195-233 (VISLGVVKPLLSFINPSIPITFLRNVTWVIVNLCRNKDP), 234-278 (PPPM…EQIQ), 279-318 (MVIDSGVVPFLVPLLSHQEVKVQTAALRAVGNIVTGTDEQ), 319-360 (TQVV…NQQQ), 361-400 (VQAVIDAGLIPMIIHQLAKGDFGTQKEAAWAISNLTISGR), and 401-443 (KDQV…IMAG). Residues 137-229 (WALTNIASGT…VTWVIVNLCR (93 aa)) form an NLS binding site (major) region. The tract at residues 306–394 (RAVGNIVTGT…QKEAAWAISN (89 aa)) is NLS binding site (minor). Residues 447 to 485 (STIAEIIEECGGLEKIEVLQQHENEDIYKLAFEIIDQYF) form an ARM 10; atypical repeat. Position 484 is a phosphotyrosine (tyrosine 484).

This sequence belongs to the importin alpha family. Forms a complex with importin subunit beta-1. Interacts with DDX21. Interacts with NCBP1, NCBP2/CBP20 and NCBP3. Interacts with RCC1. Interacts with ZC3H11A. In terms of tissue distribution, detected more or less in all tissues examined (Ehrlich ascites tumor cells, testis, kidney, spleen, liver, heart, lung, thymus, skeletal muscle, cerebellum and brain (without cerebellum)).

The protein resides in the cytoplasm. It is found in the nucleus. Functionally, functions in nuclear protein import as an adapter protein for nuclear receptor KPNB1. Binds specifically and directly to substrates containing either a simple or bipartite NLS motif. Docking of the importin/substrate complex to the nuclear pore complex (NPC) is mediated by KPNB1 through binding to nucleoporin FxFG repeats and the complex is subsequently translocated through the pore by an energy requiring, Ran-dependent mechanism. At the nucleoplasmic side of the NPC, Ran binds to importin-beta and the three components separate and importin-alpha and -beta are re-exported from the nucleus to the cytoplasm where GTP hydrolysis releases Ran from importin. The directionality of nuclear import is thought to be conferred by an asymmetric distribution of the GTP- and GDP-bound forms of Ran between the cytoplasm and nucleus. In vitro, mediates the nuclear import of human cytomegalovirus UL84 by recognizing a non-classical NLS. The chain is Importin subunit alpha-4 (Kpna3) from Mus musculus (Mouse).